Here is a 461-residue protein sequence, read N- to C-terminus: tRNA modification GTPase MnmE (461 aa).

Arg-23, Glu-88, and Arg-127 together coordinate (6S)-5-formyl-5,6,7,8-tetrahydrofolate. The 161-residue stretch at Gly-223–Phe-383 folds into the TrmE-type G domain. Asn-233 contributes to the K(+) binding site. GTP contacts are provided by residues Asn-233 to Ser-238, Thr-252 to Thr-258, and Asp-277 to Gly-280. A Mg(2+)-binding site is contributed by Ser-237. K(+) contacts are provided by Thr-252, Ile-254, and Thr-257. Thr-258 is a Mg(2+) binding site. Lys-461 contributes to the (6S)-5-formyl-5,6,7,8-tetrahydrofolate binding site.

The protein belongs to the TRAFAC class TrmE-Era-EngA-EngB-Septin-like GTPase superfamily. TrmE GTPase family. In terms of assembly, homodimer. Heterotetramer of two MnmE and two MnmG subunits. K(+) is required as a cofactor.

It localises to the cytoplasm. Exhibits a very high intrinsic GTPase hydrolysis rate. Involved in the addition of a carboxymethylaminomethyl (cmnm) group at the wobble position (U34) of certain tRNAs, forming tRNA-cmnm(5)s(2)U34. This chain is tRNA modification GTPase MnmE, found in Clostridium botulinum (strain Langeland / NCTC 10281 / Type F).